The chain runs to 919 residues: Alanine--tRNA ligase (919 aa).

Residues His-565, His-569, Cys-667, and His-671 each coordinate Zn(2+).

This sequence belongs to the class-II aminoacyl-tRNA synthetase family. It depends on Zn(2+) as a cofactor.

The protein resides in the cytoplasm. The catalysed reaction is tRNA(Ala) + L-alanine + ATP = L-alanyl-tRNA(Ala) + AMP + diphosphate. Functionally, catalyzes the attachment of alanine to tRNA(Ala) in a two-step reaction: alanine is first activated by ATP to form Ala-AMP and then transferred to the acceptor end of tRNA(Ala). Also edits incorrectly charged Ser-tRNA(Ala) and Gly-tRNA(Ala) via its editing domain. The sequence is that of Alanine--tRNA ligase from Leptospira biflexa serovar Patoc (strain Patoc 1 / Ames).